A 137-amino-acid polypeptide reads, in one-letter code: Small ribosomal subunit protein uS9 (137 aa).

The tract at residues 104–137 (PLKSEGYLTRDPRAKERKKYGLHKARKAPQYSKR) is disordered. A compositionally biased stretch (basic residues) spans 118 to 137 (KERKKYGLHKARKAPQYSKR).

The protein belongs to the universal ribosomal protein uS9 family.

The protein is Small ribosomal subunit protein uS9 of Gloeothece citriformis (strain PCC 7424) (Cyanothece sp. (strain PCC 7424)).